The following is a 103-amino-acid chain: Nucleoid-associated protein CFF8240_0066 (103 aa).

This sequence belongs to the YbaB/EbfC family. Homodimer.

It localises to the cytoplasm. The protein resides in the nucleoid. Functionally, binds to DNA and alters its conformation. May be involved in regulation of gene expression, nucleoid organization and DNA protection. In Campylobacter fetus subsp. fetus (strain 82-40), this protein is Nucleoid-associated protein CFF8240_0066.